The following is a 1039-amino-acid chain: Kinesin-like protein KIN-5B (1039 aa).

Residues 48–390 form the Kinesin motor domain; that stretch reads NVQVILRCKP…LDYAYRAKNI (343 aa). Residue 134–141 participates in ATP binding; the sequence is GQTGTGKT. Residues 1008 to 1039 are disordered; that stretch reads TLSEEHTSLEKISTKQGLGEANNRTPFLEVNK. Residues 1010–1020 are compositionally biased toward basic and acidic residues; the sequence is SEEHTSLEKIS.

The protein belongs to the TRAFAC class myosin-kinesin ATPase superfamily. Kinesin family. KIN-5/BimC subfamily.

The protein resides in the cytoplasm. The protein localises to the cytoskeleton. Its subcellular location is the spindle. In terms of biological role, responsible for microtubule translocation. May be important for the organization of phragmoplast-specific arrays of microtubules. Plays an essential role in stabilizing the mitotic spindle. Required during mitotic cytokinesis. This is Kinesin-like protein KIN-5B from Arabidopsis thaliana (Mouse-ear cress).